Reading from the N-terminus, the 499-residue chain is MEFSVKNGSVEKQRTACLVVGVYEPRRLSAAAEQLDKLSEGYISTLLRRGDLEGKAGQTLLLHNVPNVPADRVLLVGCGKERELTERQYKQIIQKMVQAVSETGSMEVVCFLTELHVKGRTSYWNVRFAIEAIQESLYSYNDFKSIKPEVRREFRRVIFNVANRKDLADAERALEHGKAISTGVAFAKNVANCPPNVCNPAYLAELAKGLAAEYDNIRTTVIDEAEMAALGMNAYLAVSRGSQNPAYLSVIEYKNHPNPDAKPIVLVGKGLTFDSGGISIKPSDSMDEMKYDMGGAASVYGTMKALAEMKLPLNVIGVLAGCENMPDGNAYRPGDILTTMNGLTVEVLNTDAEGRLVLCDTLTYVERFEPELVIDMATLTGACMIALGAHNSGLMSTSNVLANDLLNAAEQADDKAWRLPLGEEYQEQLKSNFADLANIGGRLGGAITAGQLLSNFTKKYVWAHLDIAGTAWKSGVAKGATGRPVSLLSQFLINKANNQ.

Residues Lys-269 and Asp-274 each coordinate Mn(2+). Residue Lys-281 is part of the active site. Asp-292, Asp-351, and Glu-353 together coordinate Mn(2+). Residue Arg-355 is part of the active site.

This sequence belongs to the peptidase M17 family. The cofactor is Mn(2+).

The protein resides in the cytoplasm. It catalyses the reaction Release of an N-terminal amino acid, Xaa-|-Yaa-, in which Xaa is preferably Leu, but may be other amino acids including Pro although not Arg or Lys, and Yaa may be Pro. Amino acid amides and methyl esters are also readily hydrolyzed, but rates on arylamides are exceedingly low.. It carries out the reaction Release of an N-terminal amino acid, preferentially leucine, but not glutamic or aspartic acids.. Presumably involved in the processing and regular turnover of intracellular proteins. Catalyzes the removal of unsubstituted N-terminal amino acids from various peptides. This Actinobacillus pleuropneumoniae serotype 7 (strain AP76) protein is Probable cytosol aminopeptidase.